We begin with the raw amino-acid sequence, 115 residues long: U3-lycotoxin-Ls1v (115 aa).

The N-terminal stretch at 1 to 20 (MKFVLLFGVLLVTLFSHSSA) is a signal peptide. The propeptide occupies 21–44 (EMLDDFDQADEDELLSLIEKEEAR). 4 disulfides stabilise this stretch: cysteine 48–cysteine 63, cysteine 55–cysteine 72, cysteine 62–cysteine 87, and cysteine 74–cysteine 85.

Belongs to the neurotoxin 19 (CSTX) family. 01 subfamily. In terms of tissue distribution, expressed by the venom gland.

It is found in the secreted. In Lycosa singoriensis (Wolf spider), this protein is U3-lycotoxin-Ls1v.